Reading from the N-terminus, the 156-residue chain is ATP synthase subunit b (156 aa).

A helical membrane pass occupies residues 7–27 (FFAQMVVFFILWWVVAKFIWP).

This sequence belongs to the ATPase B chain family. In terms of assembly, F-type ATPases have 2 components, F(1) - the catalytic core - and F(0) - the membrane proton channel. F(1) has five subunits: alpha(3), beta(3), gamma(1), delta(1), epsilon(1). F(0) has three main subunits: a(1), b(2) and c(10-14). The alpha and beta chains form an alternating ring which encloses part of the gamma chain. F(1) is attached to F(0) by a central stalk formed by the gamma and epsilon chains, while a peripheral stalk is formed by the delta and b chains.

It localises to the cell inner membrane. In terms of biological role, f(1)F(0) ATP synthase produces ATP from ADP in the presence of a proton or sodium gradient. F-type ATPases consist of two structural domains, F(1) containing the extramembraneous catalytic core and F(0) containing the membrane proton channel, linked together by a central stalk and a peripheral stalk. During catalysis, ATP synthesis in the catalytic domain of F(1) is coupled via a rotary mechanism of the central stalk subunits to proton translocation. Functionally, component of the F(0) channel, it forms part of the peripheral stalk, linking F(1) to F(0). This Cupriavidus metallidurans (strain ATCC 43123 / DSM 2839 / NBRC 102507 / CH34) (Ralstonia metallidurans) protein is ATP synthase subunit b.